The chain runs to 203 residues: Probable Tat proofreading chaperone DmsD (203 aa).

It belongs to the TorD/DmsD family. DmsD subfamily.

Functionally, required for biogenesis/assembly of DMSO reductase, but not for the interaction of the DmsA signal peptide with the Tat system. May be part of a chaperone cascade complex that facilitates a folding-maturation pathway for the substrate protein. This Haemophilus influenzae (strain ATCC 51907 / DSM 11121 / KW20 / Rd) protein is Probable Tat proofreading chaperone DmsD.